We begin with the raw amino-acid sequence, 111 residues long: Small ribosomal subunit protein bS16 (111 aa).

Positions 92 to 111 are disordered; it reads EKGVKESNEIVEPEGEEVKE. The segment covering 100–111 has biased composition (acidic residues); sequence EIVEPEGEEVKE.

This sequence belongs to the bacterial ribosomal protein bS16 family.

In Petrotoga mobilis (strain DSM 10674 / SJ95), this protein is Small ribosomal subunit protein bS16.